A 792-amino-acid polypeptide reads, in one-letter code: Cis-abienol synthase, chloroplastic (792 aa).

The transit peptide at 1–37 (MVLGLRSKIIPLPDHKLGNIKLGSVTNAICHRPCRVR) directs the protein to the chloroplast. Mg(2+)-binding residues include aspartate 539, aspartate 543, asparagine 684, and glutamate 692. The DDXXD motif motif lies at 539–543 (DDFFD).

This sequence belongs to the terpene synthase family. The cofactor is Mg(2+). In terms of tissue distribution, expressed specifically in trichomes.

The protein resides in the plastid. It is found in the chloroplast. The enzyme catalyses 8-hydroxycopalyl diphosphate = cis-abienol + diphosphate. It functions in the pathway secondary metabolite biosynthesis; terpenoid biosynthesis. In terms of biological role, involved in the biosynthesis of cis-abienol, a labdane diterpene that can be used as synthesis precursor of ambergris substitution fragance products. This chain is Cis-abienol synthase, chloroplastic, found in Nicotiana tabacum (Common tobacco).